The chain runs to 467 residues: DNA repair protein RadA (467 aa).

Residues 10-27 (CQNCGAVHSRWAGKCDSC) form a C4-type zinc finger. 98–105 (GDPGIGKS) is a binding site for ATP. The short motif at 260-264 (KNRFG) is the RadA KNRFG motif element. Positions 359–467 (DVYLNVAGGY…RIAASGAGKK (109 aa)) are lon-protease-like.

This sequence belongs to the RecA family. RadA subfamily.

Its function is as follows. DNA-dependent ATPase involved in processing of recombination intermediates, plays a role in repairing DNA breaks. Stimulates the branch migration of RecA-mediated strand transfer reactions, allowing the 3' invading strand to extend heteroduplex DNA faster. Binds ssDNA in the presence of ADP but not other nucleotides, has ATPase activity that is stimulated by ssDNA and various branched DNA structures, but inhibited by SSB. Does not have RecA's homology-searching function. This is DNA repair protein RadA from Brucella abortus (strain 2308).